The chain runs to 227 residues: Translation initiation factor 6 (227 aa).

The protein belongs to the eIF-6 family.

Binds to the 50S ribosomal subunit and prevents its association with the 30S ribosomal subunit to form the 70S initiation complex. The protein is Translation initiation factor 6 of Methanococcus maripaludis (strain C5 / ATCC BAA-1333).